Consider the following 220-residue polypeptide: MKYRSVFDIIGPVMIGPSSSHTAGAARIGRVARSLFGREPERIIVSFYGSFAETYKGHGTDVAIIGGLLDFDTFDERIKTAIQIAEAKGIDIEFRVEDAVPVHPNTAKITISDEKGELELTGISIGGGKIEITELNGFELRLSGNHPAILVVHNDKFGTIAGVANVLAKFSINVGHMEVARKDIGQLALMTIEVDQNIDDHILDELSKLPNIIQVTKIAD.

One can recognise an ACT domain in the interval 148–220 (AILVVHNDKF…NIIQVTKIAD (73 aa)).

Belongs to the iron-sulfur dependent L-serine dehydratase family. Heterodimer of an alpha chain and a beta chain. Requires [4Fe-4S] cluster as cofactor.

It catalyses the reaction L-serine = pyruvate + NH4(+). The protein operates within carbohydrate biosynthesis; gluconeogenesis. This is Probable L-serine dehydratase, beta chain (sdaAB) from Bacillus subtilis (strain 168).